An 854-amino-acid polypeptide reads, in one-letter code: Envelope glycoprotein B (854 aa).

An N-terminal signal peptide occupies residues 1–30; the sequence is MSKNWFPLLCASVLVVYVSIASSSTGTASG. Topologically, residues 31-723 are virion surface; sequence AVTPTSPTEN…EGVVGFIKNP (693 aa). N-linked (GlcNAc...) asparagine; by host glycosylation is found at Asn-40, Asn-48, and Asn-60. 5 disulfides stabilise this stretch: Cys-69–Cys-524, Cys-86–Cys-480, Cys-160–Cys-225, Cys-317–Cys-364, and Cys-546–Cys-583. The interval 127 to 133 is involved in fusion and/or binding to host membrane; the sequence is SYSFIRE. Asn-183 carries an N-linked (GlcNAc...) asparagine; by host glycan. Residues 212–219 form an involved in fusion and/or binding to host membrane region; that stretch reads GSTWLYTT. N-linked (GlcNAc...) asparagine; by host glycosylation is found at Asn-256, Asn-275, Asn-314, Asn-356, Asn-378, Asn-382, Asn-390, Asn-423, Asn-426, Asn-442, Asn-558, and Asn-595. 2 hydrophobic membrane proximal region regions span residues 669 to 721 and 700 to 720; these read VEGK…GFIK and VAIG…VGFI. The helical transmembrane segment at 724–744 threads the bilayer; that stretch reads FGSFTVILFLLAVLGVIYLIY. Topologically, residues 745-854 are intravirion; the sequence is MRQKRAYEKP…YQKIQNEYEV (110 aa).

This sequence belongs to the herpesviridae glycoprotein B family. In terms of assembly, homotrimer; disulfide-linked. Binds to heparan sulfate proteoglycans. Interacts with gH/gL heterodimer. A proteolytic cleavage by host furin generates two subunits that remain linked by disulfide bonds.

Its subcellular location is the virion membrane. It is found in the host cell membrane. It localises to the host endosome membrane. The protein resides in the host Golgi apparatus membrane. Its function is as follows. Envelope glycoprotein that forms spikes at the surface of virion envelope. Essential for the initial attachment to heparan sulfate moieties of the host cell surface proteoglycans. Involved in fusion of viral and cellular membranes leading to virus entry into the host cell. Following initial binding to its host receptors, membrane fusion is mediated by the fusion machinery composed at least of gB and the heterodimer gH/gL. May be involved in the fusion between the virion envelope and the outer nuclear membrane during virion egress. This is Envelope glycoprotein B from Macaca mulatta (Rhesus macaque).